The sequence spans 139 residues: D-ribose pyranase (139 aa).

His20 serves as the catalytic Proton donor. Substrate-binding positions include Asp28, His106, and 128–130; that span reads YAN.

The protein belongs to the RbsD / FucU family. RbsD subfamily. In terms of assembly, homodecamer.

The protein localises to the cytoplasm. The catalysed reaction is beta-D-ribopyranose = beta-D-ribofuranose. Its pathway is carbohydrate metabolism; D-ribose degradation; D-ribose 5-phosphate from beta-D-ribopyranose: step 1/2. Catalyzes the interconversion of beta-pyran and beta-furan forms of D-ribose. The protein is D-ribose pyranase of Shewanella halifaxensis (strain HAW-EB4).